The primary structure comprises 115 residues: Autophagy-related protein 8i (115 aa).

Gly-115 carries the Phosphatidylethanolamine amidated glycine lipid modification.

The protein belongs to the ATG8 family. As to quaternary structure, interacts with ATG4. Interacts with NBR1. Gly-115 forms then a thioester bond with the 'Cys-558' of ATG7 (E1-like activating enzyme) before being transferred to the 'Cys-258' of ATG3 (the specific E2 conjugating enzyme), in order to be finally amidated with phosphatidylethanolamine. This lipid modification anchors ATG8 to autophagosomes. Constitutively expressed.

It is found in the cytoplasmic vesicle. Its subcellular location is the autophagosome membrane. The protein localises to the vacuole membrane. The protein resides in the cytoplasm. It localises to the cytoskeleton. Its function is as follows. Ubiquitin-like modifier involved in autophagosomes formation. May mediate the delivery of the autophagosomes to the vacuole via the microtubule cytoskeleton. The chain is Autophagy-related protein 8i (ATG8I) from Arabidopsis thaliana (Mouse-ear cress).